We begin with the raw amino-acid sequence, 171 residues long: Mitochondrial import inner membrane translocase subunit Tim17-A (171 aa).

A disulfide bridge connects residues C9 and C78. Helical transmembrane passes span 17 to 37 (CGGA…FKGF), 63 to 77 (GGSF…STID), and 113 to 133 (VGSA…GILL). A disordered region spans residues 144-171 (GPQFTEDHSQLPSSQLPSSPFGDYRQYQ). Positions 153–163 (QLPSSQLPSSP) are enriched in low complexity.

Belongs to the Tim17/Tim22/Tim23 family. As to quaternary structure, component of the TIM23 complex at least composed of TIMM23, TIMM17 (TIMM17A or TIMM17B) and TIMM50. The complex interacts with the TIMM44 component of the PAM complex and with DNAJC15. Degraded by YMEL1 downstream of the integrated stress response (ISR).

It is found in the mitochondrion inner membrane. In terms of biological role, essential component of the TIM23 complex, a complex that mediates the translocation of transit peptide-containing proteins across the mitochondrial inner membrane. In Mus musculus (Mouse), this protein is Mitochondrial import inner membrane translocase subunit Tim17-A (Timm17a).